The sequence spans 101 residues: Nucleoid-associated protein Cla_0113 (101 aa).

Belongs to the YbaB/EbfC family. As to quaternary structure, homodimer.

The protein resides in the cytoplasm. The protein localises to the nucleoid. Binds to DNA and alters its conformation. May be involved in regulation of gene expression, nucleoid organization and DNA protection. This is Nucleoid-associated protein Cla_0113 from Campylobacter lari (strain RM2100 / D67 / ATCC BAA-1060).